The primary structure comprises 159 residues: 6,7-dimethyl-8-ribityllumazine synthase (159 aa).

Residues Y23, 58–60 (AYE), and 82–84 (TII) contribute to the 5-amino-6-(D-ribitylamino)uracil site. Catalysis depends on H90, which acts as the Proton donor. I115 lines the 5-amino-6-(D-ribitylamino)uracil pocket. R129 contacts (2S)-2-hydroxy-3-oxobutyl phosphate.

This sequence belongs to the DMRL synthase family. As to quaternary structure, forms an icosahedral capsid composed of 60 subunits, arranged as a dodecamer of pentamers.

The enzyme catalyses (2S)-2-hydroxy-3-oxobutyl phosphate + 5-amino-6-(D-ribitylamino)uracil = 6,7-dimethyl-8-(1-D-ribityl)lumazine + phosphate + 2 H2O + H(+). It participates in cofactor biosynthesis; riboflavin biosynthesis; riboflavin from 2-hydroxy-3-oxobutyl phosphate and 5-amino-6-(D-ribitylamino)uracil: step 1/2. In terms of biological role, catalyzes the formation of 6,7-dimethyl-8-ribityllumazine by condensation of 5-amino-6-(D-ribitylamino)uracil with 3,4-dihydroxy-2-butanone 4-phosphate. This is the penultimate step in the biosynthesis of riboflavin. This Buchnera aphidicola subsp. Baizongia pistaciae (strain Bp) protein is 6,7-dimethyl-8-ribityllumazine synthase.